We begin with the raw amino-acid sequence, 333 residues long: Anthranilate phosphoribosyltransferase (333 aa).

5-phospho-alpha-D-ribose 1-diphosphate-binding positions include Gly81, 84-85 (GD), Thr89, 91-94 (NIST), 109-117 (KHGNRSVSS), and Ala121. Gly81 contacts anthranilate. Residue Ser93 participates in Mg(2+) binding. Anthranilate is bound at residue Asn112. Arg167 is an anthranilate binding site. Mg(2+) is bound by residues Asp225 and Glu226.

This sequence belongs to the anthranilate phosphoribosyltransferase family. Homodimer. It depends on Mg(2+) as a cofactor.

It carries out the reaction N-(5-phospho-beta-D-ribosyl)anthranilate + diphosphate = 5-phospho-alpha-D-ribose 1-diphosphate + anthranilate. It functions in the pathway amino-acid biosynthesis; L-tryptophan biosynthesis; L-tryptophan from chorismate: step 2/5. In terms of biological role, catalyzes the transfer of the phosphoribosyl group of 5-phosphorylribose-1-pyrophosphate (PRPP) to anthranilate to yield N-(5'-phosphoribosyl)-anthranilate (PRA). The chain is Anthranilate phosphoribosyltransferase from Haemophilus influenzae (strain PittEE).